Consider the following 212-residue polypeptide: Endothelin-1 (212 aa).

Positions 1-17 are cleaved as a signal peptide; that stretch reads MDYLLMIFSLLFVACQG. The propeptide occupies 18–50; sequence APETAVLGAELSAVGENGGEKPTPSPPWRLRRS. 2 disulfides stabilise this stretch: Cys-53–Cys-67 and Cys-55–Cys-63. A propeptide spanning residues 74–212 is cleaved from the precursor; that stretch reads VNTPEHVVPY…RYVTHNRAHW (139 aa). The endothelin-like stretch occupies residues 109–123; that stretch reads CQCASQKDKKCWNFC. Basic and acidic residues-rich tracts occupy residues 168-181 and 189-205; these read RSSE…RSET and SFHD…ERYV. The interval 168–212 is disordered; it reads RSSEEHLRQTRSETMRNSVKSSFHDPKLKGKPSRERYVTHNRAHW.

The protein belongs to the endothelin/sarafotoxin family. Expressed in lung, placental stem villi vessels and in cultured placental vascular smooth muscle cells.

It is found in the secreted. Endothelins are endothelium-derived vasoconstrictor peptides. Probable ligand for G-protein coupled receptors EDNRA and EDNRB which activates PTK2B, BCAR1, BCAR3 and, GTPases RAP1 and RHOA cascade in glomerular mesangial cells. Also binds the DEAR/FBXW7-AS1 receptor. Promotes mesenteric arterial wall remodeling via activation of ROCK signaling and subsequent colocalization of NFATC3 with F-actin filaments. NFATC3 then translocates to the nucleus where it subsequently promotes the transcription of the smooth muscle hypertrophy and differentiation marker ACTA2. The protein is Endothelin-1 (EDN1) of Homo sapiens (Human).